Reading from the N-terminus, the 495-residue chain is Aspartyl/glutamyl-tRNA(Asn/Gln) amidotransferase subunit B (495 aa).

The protein belongs to the GatB/GatE family. GatB subfamily. As to quaternary structure, heterotrimer of A, B and C subunits.

It carries out the reaction L-glutamyl-tRNA(Gln) + L-glutamine + ATP + H2O = L-glutaminyl-tRNA(Gln) + L-glutamate + ADP + phosphate + H(+). The enzyme catalyses L-aspartyl-tRNA(Asn) + L-glutamine + ATP + H2O = L-asparaginyl-tRNA(Asn) + L-glutamate + ADP + phosphate + 2 H(+). Allows the formation of correctly charged Asn-tRNA(Asn) or Gln-tRNA(Gln) through the transamidation of misacylated Asp-tRNA(Asn) or Glu-tRNA(Gln) in organisms which lack either or both of asparaginyl-tRNA or glutaminyl-tRNA synthetases. The reaction takes place in the presence of glutamine and ATP through an activated phospho-Asp-tRNA(Asn) or phospho-Glu-tRNA(Gln). The sequence is that of Aspartyl/glutamyl-tRNA(Asn/Gln) amidotransferase subunit B from Beijerinckia indica subsp. indica (strain ATCC 9039 / DSM 1715 / NCIMB 8712).